The sequence spans 256 residues: Spore coat polysaccharide biosynthesis protein SpsA (256 aa).

A disulfide bond links Cys155 and Cys243. The active site involves Asp191.

The protein belongs to the glycosyltransferase 2 family. In terms of assembly, monomer in solution.

It functions in the pathway spore coat biogenesis; spore coat polysaccharide biosynthesis. Functionally, glycosyltransferase implicated in the synthesis of the spore coat. This Bacillus subtilis (strain 168) protein is Spore coat polysaccharide biosynthesis protein SpsA (spsA).